Consider the following 117-residue polypeptide: Bomanin Bicipital 1 (117 aa).

The first 20 residues, 1 to 20, serve as a signal peptide directing secretion; that stretch reads MKCLILSFAIFVVLASQATA. Disulfide bonds link Cys-29–Cys-32 and Cys-107–Cys-110.

Belongs to the bomanin family. Hemolymph (at protein level).

It localises to the secreted. Secreted immune-induced peptide induced by Toll signaling. Has a role in resistance to bacterial and fungal infections. The polypeptide is Bomanin Bicipital 1 (Drosophila melanogaster (Fruit fly)).